The chain runs to 103 residues: Regulator of rDNA transcription protein 1 (103 aa).

2 consecutive transmembrane segments (helical) span residues Phe9–Val33 and Val40–Phe57.

The protein localises to the membrane. In terms of biological role, identified in a screen for mutants with decreased levels of rDNA transcription. This chain is Regulator of rDNA transcription protein 1 (RRT1), found in Saccharomyces cerevisiae (strain ATCC 204508 / S288c) (Baker's yeast).